Here is a 195-residue protein sequence, read N- to C-terminus: Imidazoleglycerol-phosphate dehydratase (195 aa).

It belongs to the imidazoleglycerol-phosphate dehydratase family.

It localises to the cytoplasm. The catalysed reaction is D-erythro-1-(imidazol-4-yl)glycerol 3-phosphate = 3-(imidazol-4-yl)-2-oxopropyl phosphate + H2O. It functions in the pathway amino-acid biosynthesis; L-histidine biosynthesis; L-histidine from 5-phospho-alpha-D-ribose 1-diphosphate: step 6/9. This is Imidazoleglycerol-phosphate dehydratase from Methylobacterium radiotolerans (strain ATCC 27329 / DSM 1819 / JCM 2831 / NBRC 15690 / NCIMB 10815 / 0-1).